A 260-amino-acid chain; its full sequence is HTH-type transcriptional repressor NanR (260 aa).

The 69-residue stretch at 27–95 (KKLSDMVEEE…NGERARVSMP (69 aa)) folds into the HTH gntR-type domain. Residues 55-74 (ERELMEFFNVGRPSVREALA) constitute a DNA-binding region (H-T-H motif).

This sequence belongs to the NanR family.

Transcriptional repressor that controls expression of the genes required for the catabolism of sialic acids. The chain is HTH-type transcriptional repressor NanR from Enterobacter sp. (strain 638).